Here is a 636-residue protein sequence, read N- to C-terminus: 1-deoxy-D-xylulose-5-phosphate synthase 2 (636 aa).

Residues H78 and 119–121 (AHS) each bind thiamine diphosphate. Residue D150 coordinates Mg(2+). Residues 151–152 (GS), N179, Y288, and E370 each bind thiamine diphosphate. Position 179 (N179) interacts with Mg(2+).

Belongs to the transketolase family. DXPS subfamily. As to quaternary structure, homodimer. It depends on Mg(2+) as a cofactor. Thiamine diphosphate serves as cofactor.

The enzyme catalyses D-glyceraldehyde 3-phosphate + pyruvate + H(+) = 1-deoxy-D-xylulose 5-phosphate + CO2. The protein operates within metabolic intermediate biosynthesis; 1-deoxy-D-xylulose 5-phosphate biosynthesis; 1-deoxy-D-xylulose 5-phosphate from D-glyceraldehyde 3-phosphate and pyruvate: step 1/1. Catalyzes the acyloin condensation reaction between C atoms 2 and 3 of pyruvate and glyceraldehyde 3-phosphate to yield 1-deoxy-D-xylulose-5-phosphate (DXP). This Jannaschia sp. (strain CCS1) protein is 1-deoxy-D-xylulose-5-phosphate synthase 2.